The following is a 315-amino-acid chain: MPNLKSIRDRIQSVKNTKKITEAMRLVAAARVRRAQEQVIATRPFADRLAQVLYGLQTRLRFEDVDLPLLKKREVKSVGLLVISGDRGLCGGYNTNVIRRAENRAKELKKEGLDYTFVIVGRKAEQYFRRREQPIDASYTGLEQIPTAEEANKIADELLSLFLSEKVDRIELVYTRFVSLVSSRPVIQTLLPLDTQGLEAADDEIFRLTTRGGQFEVERQTVTTQARPLPRDMIFEQDPVQILDSLLPLYLSNQLLRALQESAASELAARMTAMSNASDNAGELIKSLSLSYNKARQAAITQELLEVVGGAEALT.

The protein belongs to the ATPase gamma chain family. F-type ATPases have 2 components, CF(1) - the catalytic core - and CF(0) - the membrane proton channel. CF(1) has five subunits: alpha(3), beta(3), gamma(1), delta(1), epsilon(1). CF(0) has three main subunits: a, b and c.

The protein resides in the cellular thylakoid membrane. Its function is as follows. Produces ATP from ADP in the presence of a proton gradient across the membrane. The gamma chain is believed to be important in regulating ATPase activity and the flow of protons through the CF(0) complex. In Trichormus variabilis (strain ATCC 29413 / PCC 7937) (Anabaena variabilis), this protein is ATP synthase gamma chain.